The chain runs to 100 residues: Aspartyl/glutamyl-tRNA(Asn/Gln) amidotransferase subunit C (100 aa).

This sequence belongs to the GatC family. In terms of assembly, heterotrimer of A, B and C subunits.

The enzyme catalyses L-glutamyl-tRNA(Gln) + L-glutamine + ATP + H2O = L-glutaminyl-tRNA(Gln) + L-glutamate + ADP + phosphate + H(+). It catalyses the reaction L-aspartyl-tRNA(Asn) + L-glutamine + ATP + H2O = L-asparaginyl-tRNA(Asn) + L-glutamate + ADP + phosphate + 2 H(+). Its function is as follows. Allows the formation of correctly charged Asn-tRNA(Asn) or Gln-tRNA(Gln) through the transamidation of misacylated Asp-tRNA(Asn) or Glu-tRNA(Gln) in organisms which lack either or both of asparaginyl-tRNA or glutaminyl-tRNA synthetases. The reaction takes place in the presence of glutamine and ATP through an activated phospho-Asp-tRNA(Asn) or phospho-Glu-tRNA(Gln). In Streptococcus pyogenes serotype M18 (strain MGAS8232), this protein is Aspartyl/glutamyl-tRNA(Asn/Gln) amidotransferase subunit C.